The sequence spans 365 residues: Elongation factor Tu (365 aa).

GTP-binding positions include 1-7 (HVDHGKT), 62-66 (DCPGH), and 117-120 (NKCD). The tr-type G domain occupies 1–185 (HVDHGKTTLT…ILDTYIPEPK (185 aa)). Threonine 7 is a binding site for Mg(2+).

This sequence belongs to the TRAFAC class translation factor GTPase superfamily. Classic translation factor GTPase family. EF-Tu/EF-1A subfamily. As to quaternary structure, monomer.

It localises to the cytoplasm. It carries out the reaction GTP + H2O = GDP + phosphate + H(+). In terms of biological role, GTP hydrolase that promotes the GTP-dependent binding of aminoacyl-tRNA to the A-site of ribosomes during protein biosynthesis. The chain is Elongation factor Tu from Buchnera aphidicola subsp. Melaphis rhois.